The sequence spans 563 residues: Sperm-tail PG-rich repeat-containing protein 2 (563 aa).

3 STPGR repeats span residues 21–34 (VGPG…PKQQ), 63–73 (PGPAHYNVSQA), and 97–107 (GPGPASYDCPY). The segment at 131–163 (IPSIPSSGKSHGYHLNEDDTIMRRTPPSSDKTM) is disordered. STPGR repeat units follow at residues 200–219 (GPGP…YENI), 250–263 (PGPG…QFDH), 292–321 (TPAP…FGQR), 334–353 (LPGP…QVKK), 423–438 (LPAP…YDMS), 473–483 (GPGPATYNPIL), and 507–518 (SPGPTTYELSPF).

This is Sperm-tail PG-rich repeat-containing protein 2 (Stpg2) from Rattus norvegicus (Rat).